The chain runs to 122 residues: Large ribosomal subunit protein uL14 (122 aa).

This sequence belongs to the universal ribosomal protein uL14 family. As to quaternary structure, part of the 50S ribosomal subunit. Forms a cluster with proteins L3 and L19. In the 70S ribosome, L14 and L19 interact and together make contacts with the 16S rRNA in bridges B5 and B8.

Binds to 23S rRNA. Forms part of two intersubunit bridges in the 70S ribosome. The protein is Large ribosomal subunit protein uL14 of Chlamydia trachomatis serovar A (strain ATCC VR-571B / DSM 19440 / HAR-13).